Reading from the N-terminus, the 218-residue chain is N-(5'-phosphoribosyl)anthranilate isomerase (218 aa).

It belongs to the TrpF family.

The enzyme catalyses N-(5-phospho-beta-D-ribosyl)anthranilate = 1-(2-carboxyphenylamino)-1-deoxy-D-ribulose 5-phosphate. The protein operates within amino-acid biosynthesis; L-tryptophan biosynthesis; L-tryptophan from chorismate: step 3/5. This chain is N-(5'-phosphoribosyl)anthranilate isomerase, found in Lachnoclostridium phytofermentans (strain ATCC 700394 / DSM 18823 / ISDg) (Clostridium phytofermentans).